Reading from the N-terminus, the 384-residue chain is Urotensin-2 receptor (384 aa).

Residues 1-54 (MALSPEPSSRFLVPATMGSAMPELPGAPNASLNSSLASPTEPNSLEDLVATGTI) lie on the Extracellular side of the membrane. N-linked (GlcNAc...) asparagine glycans are attached at residues N29 and N33. Residues 55–77 (GVVLSAMGVVGMAGNVYTLTVMC) form a helical membrane-spanning segment. At 78 to 87 (RFLHTSASMY) the chain is on the cytoplasmic side. A helical transmembrane segment spans residues 88-113 (VYVINLALADLLYLLSIPFIVATYVT). The Extracellular portion of the chain corresponds to 114–124 (KRWHFGDVGCR). C123 and C199 are joined by a disulfide. The helical transmembrane segment at 125–146 (VLFSLDFLTMHASIFTLTLMSR) threads the bilayer. At 147–167 (ERYAAVVRPLDTVQRSKGYRK) the chain is on the cytoplasmic side. Residues 168-186 (VLALGTWLLALLLALPMML) form a helical membrane-spanning segment. Topologically, residues 187–209 (AIRLVRRGHKSLCLPAWGQRTHR) are extracellular. Residues 210–232 (AYLTLLFGTSIVGPGVVIGLLYV) form a helical membrane-spanning segment. The Cytoplasmic segment spans residues 233–259 (RLARAYWLSQRSSFTQTRRLPNPRVLY). A helical transmembrane segment spans residues 260 to 285 (LILGIVLLFWACFLPFWLWQLLAQYR). The Extracellular segment spans residues 286-299 (GAPPLAPRSARIVN). Residues 300–320 (YLTTCLTYGNSCVNPFLYTLL) traverse the membrane as a helical segment. At 321–384 (TKNYRDYRQR…SQAVPGSLCV (64 aa)) the chain is on the cytoplasmic side.

It belongs to the G-protein coupled receptor 1 family. In terms of tissue distribution, expressed in neural tissue, including sensory epithelia.

It localises to the cell membrane. In terms of biological role, high affinity receptor for urotensin-2 and urotensin-2B. The activity of this receptor is mediated by a G-protein that activate a phosphatidylinositol-calcium second messenger system. The protein is Urotensin-2 receptor (UTS2R) of Bos taurus (Bovine).